Here is a 598-residue protein sequence, read N- to C-terminus: MSFGSKVSRALRFLEIPVKDRASVSFLKNPDLQPIKSANQTWGFWSNFAYWGVMSFSVGTWMSASSALGVGLSYPETIGTFIVGDVLTIIFTLANSCPGYDWKVGFTLAQRFVFGIYGSAFGIIIRILMSIVNYGSNAWVGGLCINMILDSWSHHYLHLPNTLSSKVAMTTKELIGFIIFHVLTAFCYLMKPYHMNYILIWSCVATFFSMLGMVIYLAKQAHGVGELFTSTKSTATGSTKAWAWVYMISYWFGSVSPGSTNQSDYSRFGSSNWAIWAGTICALLIPTTLIPVFGVIGASTCDKLYGEQYWMPMDIFNHWLTTNYSAGARAGAFFCGLSFVLSQMSYTISNCGFASGMDLAGLLPKYVDIKRGALFAACVSWACLPWNFYNSSSTFLTVMSSFGVVMTPIISVMICDNFLIRKRQYSITNAFILKGEYYFTKGVNWRAIVAWVCGMTPGLPGIAWEVNNDYFHNTGIVNFFYGDSFFSFLISFFVYWGLCLLFPFKITVKHDDKDYYGAFTDEEARKKGMVPYSEISEEEIRAYTLGEGYTTGHEYRPEGSDDEIPELVKTSSENTNEFEIVHHKNNEKQSSTASEKAA.

The Cytoplasmic segment spans residues 1–41; sequence MSFGSKVSRALRFLEIPVKDRASVSFLKNPDLQPIKSANQT. A helical transmembrane segment spans residues 42–62; it reads WGFWSNFAYWGVMSFSVGTWM. Topologically, residues 63-73 are extracellular; it reads SASSALGVGLS. The chain crosses the membrane as a helical span at residues 74–94; it reads YPETIGTFIVGDVLTIIFTLA. Residues 95–111 lie on the Cytoplasmic side of the membrane; the sequence is NSCPGYDWKVGFTLAQR. The chain crosses the membrane as a helical span at residues 112 to 132; it reads FVFGIYGSAFGIIIRILMSIV. At 133–173 the chain is on the extracellular side; that stretch reads NYGSNAWVGGLCINMILDSWSHHYLHLPNTLSSKVAMTTKE. The chain crosses the membrane as a helical span at residues 174-194; that stretch reads LIGFIIFHVLTAFCYLMKPYH. Residues 195-197 are Cytoplasmic-facing; the sequence is MNY. Residues 198–218 form a helical membrane-spanning segment; the sequence is ILIWSCVATFFSMLGMVIYLA. Over 219 to 240 the chain is Extracellular; it reads KQAHGVGELFTSTKSTATGSTK. Residues 241 to 261 traverse the membrane as a helical segment; that stretch reads AWAWVYMISYWFGSVSPGSTN. The Cytoplasmic segment spans residues 262-274; it reads QSDYSRFGSSNWA. A helical membrane pass occupies residues 275-295; sequence IWAGTICALLIPTTLIPVFGV. The Extracellular portion of the chain corresponds to 296–332; the sequence is IGASTCDKLYGEQYWMPMDIFNHWLTTNYSAGARAGA. Residues 333 to 353 form a helical membrane-spanning segment; that stretch reads FFCGLSFVLSQMSYTISNCGF. The Cytoplasmic segment spans residues 354–371; sequence ASGMDLAGLLPKYVDIKR. The helical transmembrane segment at 372 to 392 threads the bilayer; sequence GALFAACVSWACLPWNFYNSS. At 393-394 the chain is on the extracellular side; sequence ST. Residues 395-415 form a helical membrane-spanning segment; the sequence is FLTVMSSFGVVMTPIISVMIC. Residues 416–446 lie on the Cytoplasmic side of the membrane; it reads DNFLIRKRQYSITNAFILKGEYYFTKGVNWR. A helical transmembrane segment spans residues 447 to 467; that stretch reads AIVAWVCGMTPGLPGIAWEVN. Residues 468-483 lie on the Extracellular side of the membrane; the sequence is NDYFHNTGIVNFFYGD. Residues 484 to 504 traverse the membrane as a helical segment; sequence SFFSFLISFFVYWGLCLLFPF. Residues 505–598 are Cytoplasmic-facing; it reads KITVKHDDKD…QSSTASEKAA (94 aa). S560 carries the post-translational modification Phosphoserine. Positions 574 to 598 are disordered; that stretch reads NTNEFEIVHHKNNEKQSSTASEKAA. The segment covering 588 to 598 has biased composition (polar residues); it reads KQSSTASEKAA.

It belongs to the purine-cytosine permease (2.A.39) family.

Its subcellular location is the membrane. Functionally, responsible for intake of thiamine. The polypeptide is Thiamine transporter (THI7) (Saccharomyces cerevisiae (strain ATCC 204508 / S288c) (Baker's yeast)).